We begin with the raw amino-acid sequence, 633 residues long: Probably inactive receptor-like protein kinase At2g46850 (633 aa).

The first 28 residues, 1 to 28 (MPPLFLPSSSSALFLLLLLLLTLQTLTS), serve as a signal peptide directing secretion. Residues 29–285 (ISLSQPQALR…IKKHNGKKLT (257 aa)) lie on the Extracellular side of the membrane. N-linked (GlcNAc...) asparagine glycans are attached at residues N45, N69, and N231. A helical transmembrane segment spans residues 286-306 (VLAGVLAPLFILGSLLALFCL). Residues 307-633 (LKRPVTSHKD…SPDSIYLPKT (327 aa)) are Cytoplasmic-facing. The Protein kinase domain maps to 355–633 (FQDSQKLTQG…SPDSIYLPKT (279 aa)). ATP is bound by residues 361–369 (LTQGKTGTI) and K384.

The protein belongs to the protein kinase superfamily. Ser/Thr protein kinase family.

It localises to the membrane. The chain is Probably inactive receptor-like protein kinase At2g46850 from Arabidopsis thaliana (Mouse-ear cress).